The sequence spans 704 residues: E3 ubiquitin-protein ligase MBR1 (704 aa).

Disordered stretches follow at residues 1 to 20 (MNPMQGPRSIGGSSTEVNQV), 37 to 61 (NPADTGFPNNSTPSGRPTYASSSSH), 176 to 197 (SSLGSSVQAAGESSSGPASPFG), 245 to 354 (LSLA…GENQ), 381 to 403 (SNPSGIGMPAERLGPQWETPRSN), and 436 to 525 (SLFV…RHRR). A compositionally biased stretch (polar residues) spans 43–61 (FPNNSTPSGRPTYASSSSH). 2 stretches are compositionally biased toward low complexity: residues 184-196 (AAGESSSGPASPF) and 245-255 (LSLATPSQSSP). Composition is skewed to polar residues over residues 281–290 (FHSTRNTDTL), 300–329 (RQPQESVAFSVSHGGTSVRPTGSLQQNLPL), and 340–354 (RSSSITSGSNTGENQ). Pro residues predominate over residues 452 to 467 (QPNPTWIPPQNAPPHN). The span at 485–505 (SPSASHGGPLPLLPAGPSVSS) shows a compositional bias: low complexity. Residues 656 to 697 (CCICQEEYVEGDNLGTLKCGHEFHKDCIKQWVMIKNLCPICK) form an RING-type; atypical zinc finger.

It belongs to the RING-type zinc finger family. As to quaternary structure, interacts with MED25 and UBC11.

It catalyses the reaction S-ubiquitinyl-[E2 ubiquitin-conjugating enzyme]-L-cysteine + [acceptor protein]-L-lysine = [E2 ubiquitin-conjugating enzyme]-L-cysteine + N(6)-ubiquitinyl-[acceptor protein]-L-lysine.. It functions in the pathway protein modification; protein ubiquitination. Functionally, E3 ubiquitin-protein ligase that functions as a regulator of MED25 stability by targeting MED25 for degradation in a RING-H2-dependent way. Proteasome-dependent degradation of MED25 seems to activate its function as positive regulator of FLOWERING LOCUS T (FT) and is important to induce the expression of FT and consequently to promote flowering. This Arabidopsis thaliana (Mouse-ear cress) protein is E3 ubiquitin-protein ligase MBR1 (MBR1).